The chain runs to 950 residues: Coatomer subunit beta-2 (950 aa).

HEAT repeat units lie at residues 92–126 (PEMILICQNLRNNLHHPNEYIRGVTLRFLCRLSEP), 127–164 (EVLEPLVPSILENLDHRHHFIRRHALSAISSIYRLPHG), 275–312 (TAVRAAANTYCELLSSQSDNNVKLIVLDRLNELRTSHR), 313–350 (DVMVDVVMDVLRALASPNLDVKRKVLDLVLDLLTARNV), and 392–429 (EVAGSVVHLLMDFLGDTNVAAAVDVVLFVREIIETNPK).

As to quaternary structure, oligomeric complex that consists of at least the alpha, beta, beta', gamma, delta, epsilon and zeta subunits.

It is found in the cytoplasm. The protein resides in the golgi apparatus membrane. It localises to the cytoplasmic vesicle. Its subcellular location is the COPI-coated vesicle membrane. Functionally, the coatomer is a cytosolic protein complex that binds to dilysine motifs and reversibly associates with Golgi non-clathrin-coated vesicles, which further mediate biosynthetic protein transport from the ER, via the Golgi up to the trans Golgi network. Coatomer complex is required for budding from Golgi membranes, and is essential for the retrograde Golgi-to-ER transport of dilysine-tagged proteins. This chain is Coatomer subunit beta-2, found in Oryza sativa subsp. japonica (Rice).